The following is a 191-amino-acid chain: Protein GrpE (191 aa).

The segment covering 1–10 (MNHEEQKVEA) has biased composition (basic and acidic residues). The disordered stretch occupies residues 1–28 (MNHEEQKVEAMEQVEAQPVEPTDVDSEV).

It belongs to the GrpE family. In terms of assembly, homodimer.

It localises to the cytoplasm. Participates actively in the response to hyperosmotic and heat shock by preventing the aggregation of stress-denatured proteins, in association with DnaK and GrpE. It is the nucleotide exchange factor for DnaK and may function as a thermosensor. Unfolded proteins bind initially to DnaJ; upon interaction with the DnaJ-bound protein, DnaK hydrolyzes its bound ATP, resulting in the formation of a stable complex. GrpE releases ADP from DnaK; ATP binding to DnaK triggers the release of the substrate protein, thus completing the reaction cycle. Several rounds of ATP-dependent interactions between DnaJ, DnaK and GrpE are required for fully efficient folding. The protein is Protein GrpE of Aeromonas hydrophila subsp. hydrophila (strain ATCC 7966 / DSM 30187 / BCRC 13018 / CCUG 14551 / JCM 1027 / KCTC 2358 / NCIMB 9240 / NCTC 8049).